Consider the following 1589-residue polypeptide: MVKFEKVPILGKESIHVGYDIHTDMVQTIINDCRSSTYVVVNDTNLSKVPYCQDFVQELRSSLPEGSRLLQYAVKPGEANKTRSTKADIEDYLLSKGCTRDTVIIAIGGGIIGDMVGFVAATFMRGVRVVQVPTSLLAMVDSSIGGKTAVDTPLGKNFIGAFWQPQFVLVDVKWLETLPRREFINGMAEVIKTACIWNGLEFERLESNAELFLRVVNGSKVIKVNGLSTGEVNDIHYTNIEAMLEHTFKLVLESIKVKAEVVSSDERESSLRNLLNFGHSVGHAYEAILTPQALHGECVSIGMIKEAELSRYLGILSPTQVSRLTKILAAYGLPISPEEKWFKDLTLQKKTPLDVLLQKMSIDKKNDGSKKKVVILESIGKCYGKSAHYVNDEDLKFVLTDETLVYPFSNIPQEQAKTIVPPGSKSISNRALILAALGKGTCKIKNLLHSDDTKHMLTAVQELKGASITWEDNGETVVLEGHGGETLTASADPLYLGNAGTASRFLTTLAALVNSSSKQDYVVLTGNARMQQRPIGPLVDSLRTNGTKIDYLKSEGSLPLKIYTSTPFKGGRIELAATVSSQYVSSVLMCAPYAENPVTLALVGGKPISQLYVDMTIKMMEKFGIKVEVSTTEPYTYHIPKGQYTNPPEYIIESDASSATYPLAFAAMTGTTVTVPNIGYESLQGDARFAIEVLRPMGCKVEQTANSTTVTGPPTGSLRPLKHVDMEPMTDAFLTASVVAAVAHDNDTDSANVTTIEGIANQRVKECNRIEAMSTELAKFGVATKELPDGIQIHGINSLDLLQLPSNSTGPIGIESYDDHRVAMSLSLLAGMVNYSKSHPAADIKPVRILERRCTGKTWPGWWDVLHTELGAHLDGAEPLGYLSGKKTKRSVVLIGMRAAGKSTLGRWCSQILGYELCDLDVLFEKQYAKGTVKDFVAEHGWDKFREAEANLFKETVEQYGDGGYVFSAGGGLVENEVSREHLKKYASDGGVVLHLHRDIEETIVFLQSDPTRPAYMEEIRDVWERREKWYNECSNFAFLAPHCSNEKEFQHLRKSFANYITAITGNREVQVPNKRSAFVCLTFGDLTEKASVLPSIVRGCDAVELRVDHLAKYDSQFVSKQLSTLRTATNDLPIVFTLRTKKQGGKFPDEDYTGMARLFDVALKACVEYIDLELTLPIDVQYKVSNTKGYTKIIGSHHDFGAKYPWKDPEWENRYNQALSLDVDVIKFVGTATKFEDNLALERFREEHKSKPLIAINMGEIGKISRVLNPILTPITSEHLPNSSAPGQLTLAQINKIFASMGGITSKKFFVVGNPVSHSRSPVLHNTGYKLNGLPHHFDRFETDSAQVVKETLLDGEPSLGGLAVTIPLKLDIMKYMNQLTDAARVIGAMNTVIPLGNHHFKGDNTDWIGIKHSLTSNGVPEKVSNVAGLVIGAGGTSRAAIYSLHNLGCHRIFVINRTVSKSIELRDSFPQEYNVVAAETTQQIDHLNEHIGIAVSCVPADKDLDTELLAKLERFLHKGKHNSFVPTLLEAAYKPDVTPVMKLAHDKYQWQVVPGRELLVHQGVAQFEIWTGAKAPFQEIFNAVTRD.

The tract at residues 1-392 (MVKFEKVPIL…YGKSAHYVND (392 aa)) is 3-dehydroquinate synthase. NAD(+) is bound by residues 43–45 (DTN), 78–81 (EANK), 109–111 (GGI), and D114. Position 125 (R125) interacts with 7-phospho-2-dehydro-3-deoxy-D-arabino-heptonate. Residue 134–135 (TS) participates in NAD(+) binding. Positions 141 and 147 each coordinate 7-phospho-2-dehydro-3-deoxy-D-arabino-heptonate. K156 provides a ligand contact to NAD(+). A 7-phospho-2-dehydro-3-deoxy-D-arabino-heptonate-binding site is contributed by N157. NAD(+) contacts are provided by residues 174 to 177 (WLET) and N185. Zn(2+) is bound at residue E189. 7-phospho-2-dehydro-3-deoxy-D-arabino-heptonate is bound by residues 189–192 (EVIK) and K258. The active-site Proton acceptor; for 3-dehydroquinate synthase activity is the E268. Residues 272–276 (RNLLN) and H279 contribute to the 7-phospho-2-dehydro-3-deoxy-D-arabino-heptonate site. H279 provides a ligand contact to Zn(2+). The active-site Proton acceptor; for 3-dehydroquinate synthase activity is the H283. Residues H295 and K364 each coordinate 7-phospho-2-dehydro-3-deoxy-D-arabino-heptonate. Residue H295 coordinates Zn(2+). The segment at 405–872 (VYPFSNIPQE…WDVLHTELGA (468 aa)) is EPSP synthase. The active-site For EPSP synthase activity is C854. The segment at 891-1081 (SVVLIGMRAA…VPNKRSAFVC (191 aa)) is shikimate kinase. 896–903 (GMRAAGKS) lines the ATP pocket. The tract at residues 1082 to 1294 (LTFGDLTEKA…SAPGQLTLAQ (213 aa)) is 3-dehydroquinase. Residue H1199 is the Proton acceptor; for 3-dehydroquinate dehydratase activity of the active site. K1228 serves as the catalytic Schiff-base intermediate with substrate; for 3-dehydroquinate dehydratase activity. The tract at residues 1307–1589 (SKKFFVVGNP…QEIFNAVTRD (283 aa)) is shikimate dehydrogenase.

It in the N-terminal section; belongs to the sugar phosphate cyclases superfamily. Dehydroquinate synthase family. This sequence in the 2nd section; belongs to the EPSP synthase family. The protein in the 3rd section; belongs to the shikimate kinase family. In the 4th section; belongs to the type-I 3-dehydroquinase family. It in the C-terminal section; belongs to the shikimate dehydrogenase family. In terms of assembly, homodimer. Requires Zn(2+) as cofactor.

Its subcellular location is the cytoplasm. It catalyses the reaction 7-phospho-2-dehydro-3-deoxy-D-arabino-heptonate = 3-dehydroquinate + phosphate. It carries out the reaction 3-dehydroquinate = 3-dehydroshikimate + H2O. The enzyme catalyses shikimate + NADP(+) = 3-dehydroshikimate + NADPH + H(+). The catalysed reaction is shikimate + ATP = 3-phosphoshikimate + ADP + H(+). It catalyses the reaction 3-phosphoshikimate + phosphoenolpyruvate = 5-O-(1-carboxyvinyl)-3-phosphoshikimate + phosphate. The protein operates within metabolic intermediate biosynthesis; chorismate biosynthesis; chorismate from D-erythrose 4-phosphate and phosphoenolpyruvate: step 2/7. It participates in metabolic intermediate biosynthesis; chorismate biosynthesis; chorismate from D-erythrose 4-phosphate and phosphoenolpyruvate: step 3/7. It functions in the pathway metabolic intermediate biosynthesis; chorismate biosynthesis; chorismate from D-erythrose 4-phosphate and phosphoenolpyruvate: step 4/7. Its pathway is metabolic intermediate biosynthesis; chorismate biosynthesis; chorismate from D-erythrose 4-phosphate and phosphoenolpyruvate: step 5/7. The protein operates within metabolic intermediate biosynthesis; chorismate biosynthesis; chorismate from D-erythrose 4-phosphate and phosphoenolpyruvate: step 6/7. In terms of biological role, the AROM polypeptide catalyzes 5 consecutive enzymatic reactions in prechorismate polyaromatic amino acid biosynthesis. In Zygosaccharomyces rouxii (strain ATCC 2623 / CBS 732 / NBRC 1130 / NCYC 568 / NRRL Y-229), this protein is Pentafunctional AROM polypeptide.